The following is a 455-amino-acid chain: Pup--protein ligase (455 aa).

A Mg(2+)-binding site is contributed by Glu10. Arg55 contributes to the ATP binding site. A Mg(2+)-binding site is contributed by Tyr57. Asp59 (proton acceptor) is an active-site residue. Glu65 lines the Mg(2+) pocket. 2 residues coordinate ATP: Thr68 and Trp422.

The protein belongs to the Pup ligase/Pup deamidase family. Pup-conjugating enzyme subfamily.

The enzyme catalyses ATP + [prokaryotic ubiquitin-like protein]-L-glutamate + [protein]-L-lysine = ADP + phosphate + N(6)-([prokaryotic ubiquitin-like protein]-gamma-L-glutamyl)-[protein]-L-lysine.. The protein operates within protein degradation; proteasomal Pup-dependent pathway. Its pathway is protein modification; protein pupylation. Functionally, catalyzes the covalent attachment of the prokaryotic ubiquitin-like protein modifier Pup to the proteasomal substrate proteins, thereby targeting them for proteasomal degradation. This tagging system is termed pupylation. The ligation reaction involves the side-chain carboxylate of the C-terminal glutamate of Pup and the side-chain amino group of a substrate lysine. This is Pup--protein ligase from Sanguibacter keddieii (strain ATCC 51767 / DSM 10542 / NCFB 3025 / ST-74).